We begin with the raw amino-acid sequence, 470 residues long: Sorting nexin-17 (470 aa).

One can recognise a PX domain in the interval 1–109 (MHFSIPETES…SFLRRAQQET (109 aa)). A 1,2-diacyl-sn-glycero-3-phospho-(1D-myo-inositol-3-phosphate)-binding residues include R36, S38, K62, and R75. Positions 115 to 206 (EEVSLEVLLS…YKIVLRKSYW (92 aa)) constitute a Ras-associating domain. The segment at 115–432 (EEVSLEVLLS…DASRESMVKL (318 aa)) is FERM-like. The tract at residues 270–432 (GYLRFDACVA…DASRESMVKL (163 aa)) is PTB-like F3 module. Phosphoserine is present on residues S336, S407, S409, S415, S421, S437, and S440. The disordered stretch occupies residues 401–426 (GGTLRRSDSQQAVKSPPLLESPDASR).

This sequence belongs to the sorting nexin family. As to quaternary structure, monomer. Interacts with APP (via cytoplasmic YXNPXY motif). Interacts with KIF1B. Interacts with the C-termini of P-selectin, PTC, LDLR, VLDLR, LRP1 and LRP8. Interacts with KRIT1 (via N-terminus). Interacts with HRAS. Interacts with ITGB1 and ITGB5 (via NPxY motif). Interacts with CCDC22 and CCDC93; the interaction associates SNX17 with the CCC complex. Interacts (via C-terminus) with VPS26C and VPS35L; the interactions are direct and associate SNX17 with the retriever complex. In terms of tissue distribution, detected in brain neurons (at protein level). Broadly expressed, with highest levels in brain and placenta, and lowest levels in colon, intestine and liver.

The protein localises to the cytoplasm. The protein resides in the early endosome. It is found in the cytoplasmic vesicle membrane. Its function is as follows. Critical regulator of endosomal recycling of numerous surface proteins, including integrins, signaling receptor and channels. Binds to NPxY sequences in the cytoplasmic tails of target cargos. Associates with retriever and CCC complexes to prevent lysosomal degradation and promote cell surface recycling of numerous cargos such as integrins ITGB1, ITGB5 and their associated alpha subunits. Also required for maintenance of normal cell surface levels of APP and LRP1. Interacts with membranes containing phosphatidylinositol 3-phosphate (PtdIns(3P)). This is Sorting nexin-17 (Snx17) from Mus musculus (Mouse).